A 570-amino-acid polypeptide reads, in one-letter code: Urease subunit alpha (570 aa).

Residues G131–F570 enclose the Urease domain. 3 residues coordinate Ni(2+): H136, H138, and K219. K219 is modified (N6-carboxylysine). H221 contributes to the substrate binding site. Residues H248 and H274 each coordinate Ni(2+). The active-site Proton donor is H322. D362 lines the Ni(2+) pocket.

The protein belongs to the metallo-dependent hydrolases superfamily. Urease alpha subunit family. As to quaternary structure, heterotrimer of UreA (gamma), UreB (beta) and UreC (alpha) subunits. Three heterotrimers associate to form the active enzyme. Ni cation is required as a cofactor. Post-translationally, carboxylation allows a single lysine to coordinate two nickel ions.

The protein localises to the cytoplasm. The catalysed reaction is urea + 2 H2O + H(+) = hydrogencarbonate + 2 NH4(+). It participates in nitrogen metabolism; urea degradation; CO(2) and NH(3) from urea (urease route): step 1/1. The chain is Urease subunit alpha from Mesorhizobium japonicum (strain LMG 29417 / CECT 9101 / MAFF 303099) (Mesorhizobium loti (strain MAFF 303099)).